We begin with the raw amino-acid sequence, 1173 residues long: Protein GIGANTEA (1173 aa).

3 disordered regions span residues 150 to 187, 604 to 641, and 840 to 863; these read EQQN…RKPL, SGSK…NVKG, and SRTE…SGRP. 2 stretches are compositionally biased toward polar residues: residues 162-172 and 613-633; these read SKATTSGSPTS and YAST…QTAN. Basic and acidic residues predominate over residues 854–863; that stretch reads RHSDEGSGRP.

The protein belongs to the GIGANTEA family. In terms of assembly, interacts with SPY. Interacts with ADO1 (via N-terminus) and ADO2. Interacts with ADO3 (via N-terminus). Interacts (via N-terminus) with CDF1. Interacts (via N-terminus) with TCP4. Widely expressed with highest levels in inflorescence apices, young flowers and young siliques.

The protein localises to the nucleus. It is found in the cytoplasm. Functionally, involved in regulation of circadian rhythm and photoperiodic flowering. May play a role in maintenance of circadian amplitude and period length. Is involved in phytochrome B signaling. Stabilizes ADO3 and the circadian photoreceptor ADO1/ZTL. Regulates 'CONSTANS' (CO) in the long-day flowering pathway by modulating the ADO3-dependent protein stability of CDF1 and CDF2, but is not essential to activate CO transcription. Regulates, via the microRNA miR172, a CO-independent pathway that promotes photoperiodic flowering by inducing 'FLOWERING LOCUS T'. The polypeptide is Protein GIGANTEA (GI) (Arabidopsis thaliana (Mouse-ear cress)).